The following is a 905-amino-acid chain: MATIHVDGKTLEVDGADNLLQACLSLGLDIPYFCWHPALGSVGACRQCAVKQYTDENDKRGRLVMSCMTPATDNTWISIEDEEAKQFRASVVEWLMTNHPHDCPVCEEGGHCHLQDMTVMTGHNERRYRFTKRTHQNQELGPFIAHEMNRCIACYRCVRYYKDYAGGTDLGVYGAHDNVYFGRVEDGVLESEFSGNLTEVCPTGVFTDKTHSERYNRKWDMQFAPSICHGCSSGCNISPGERYGEIRRIENRYNGSVNHYFLCDRGRFGYGYVNREDRPRQPLLVLSKQKLSLDGALDQAAALLKERKVVGIGSPRASLESNFALRELVGEGNFYSGINEGELDRLRLILQVMQEGPLPVPSIRDIEDHDAVFVLGEDLTQTAARIALALRQSVKGKAVEMAADMKVQPWLDAAVKNIAQHAQNPLFIASVSATRLDDVAEETVHAAPDDLARLGFAVAHAIDPSAPSVADLDPQAQAFAQRITDALLAAKRPLVVSGNSLGNKALIEAAANIAKALKQREKNGSISLVVGEANSLGLALFGGDSVEAALERLTSGQADAVVVLENDLYRRTDAARVDAALAAAKVVIVADHQQTATTAKAHLVLPAASFAEGDGTLVSQEGRAQRFFQVFDPTYYDARNMVREGWRWLHAIHSTLQGKRVDWTQLDHVTEAVAEAKPILAGIRDAAPAASFRIKGLKLAREPHRYSGRTAMRANISVHEPRTPQDIDSAFAFSMEGYSGSQEDRQQIPFAWSPGWNSPQAWNKFQDEVGGHLRAGDPGVRLIEPKGEGLDWFQAVPVPFSAKADSWKVVPLYHLFGSEENSSRAAPIQQRIPETYVALSKEDADRLGVNDGATLGFQLKGQALRLPLRIDEQLGAGLIGLPVGFAGIPAAIAGCSVEGLQEAAQ.

Residues 1-83 enclose the 2Fe-2S ferredoxin-type domain; that stretch reads MATIHVDGKT…NTWISIEDEE (83 aa). Positions 34, 45, 48, and 67 each coordinate [2Fe-2S] cluster. A 4Fe-4S His(Cys)3-ligated-type domain is found at 83-122; that stretch reads EAKQFRASVVEWLMTNHPHDCPVCEEGGHCHLQDMTVMTG. Histidine 99, cysteine 103, cysteine 106, cysteine 112, cysteine 151, cysteine 154, cysteine 157, cysteine 201, cysteine 228, cysteine 231, cysteine 235, and cysteine 263 together coordinate [4Fe-4S] cluster. One can recognise a 4Fe-4S Mo/W bis-MGD-type domain in the interval 221-277; that stretch reads MQFAPSICHGCSSGCNISPGERYGEIRRIENRYNGSVNHYFLCDRGRFGYGYVNRED.

Belongs to the complex I 75 kDa subunit family. As to quaternary structure, composed of 13 different subunits. Subunits NuoCD, E, F, and G constitute the peripheral sector of the complex. It depends on [2Fe-2S] cluster as a cofactor. [4Fe-4S] cluster is required as a cofactor.

It catalyses the reaction a quinone + NADH + 5 H(+)(in) = a quinol + NAD(+) + 4 H(+)(out). Functionally, NDH-1 shuttles electrons from NADH, via FMN and iron-sulfur (Fe-S) centers, to quinones in the respiratory chain. The immediate electron acceptor for the enzyme in this species is believed to be ubiquinone. Couples the redox reaction to proton translocation (for every two electrons transferred, four hydrogen ions are translocated across the cytoplasmic membrane), and thus conserves the redox energy in a proton gradient. The protein is NADH-quinone oxidoreductase subunit G (nuoG) of Pseudomonas aeruginosa (strain ATCC 15692 / DSM 22644 / CIP 104116 / JCM 14847 / LMG 12228 / 1C / PRS 101 / PAO1).